The following is a 284-amino-acid chain: D-tagatose-1,6-bisphosphate aldolase subunit GatY (284 aa).

The active-site Proton donor is aspartate 82. Zn(2+)-binding residues include histidine 83 and histidine 180. Dihydroxyacetone phosphate is bound at residue glycine 181. A Zn(2+)-binding site is contributed by histidine 208. Residues 209 to 211 (GAS) and 230 to 233 (NVAT) contribute to the dihydroxyacetone phosphate site.

Belongs to the class II fructose-bisphosphate aldolase family. TagBP aldolase GatY subfamily. In terms of assembly, forms a complex with GatZ. It depends on Zn(2+) as a cofactor.

It carries out the reaction D-tagatofuranose 1,6-bisphosphate = D-glyceraldehyde 3-phosphate + dihydroxyacetone phosphate. It participates in carbohydrate metabolism; D-tagatose 6-phosphate degradation; D-glyceraldehyde 3-phosphate and glycerone phosphate from D-tagatose 6-phosphate: step 2/2. Catalytic subunit of the tagatose-1,6-bisphosphate aldolase GatYZ, which catalyzes the reversible aldol condensation of dihydroxyacetone phosphate (DHAP or glycerone-phosphate) with glyceraldehyde 3-phosphate (G3P) to produce tagatose 1,6-bisphosphate (TBP). Requires GatZ subunit for full activity and stability. Is involved in the catabolism of galactitol. The chain is D-tagatose-1,6-bisphosphate aldolase subunit GatY from Shigella boydii serotype 4 (strain Sb227).